A 255-amino-acid chain; its full sequence is Malonyl-[acyl-carrier protein] O-methyltransferase (255 aa).

It belongs to the methyltransferase superfamily.

The enzyme catalyses malonyl-[ACP] + S-adenosyl-L-methionine = malonyl-[ACP] methyl ester + S-adenosyl-L-homocysteine. It functions in the pathway cofactor biosynthesis; biotin biosynthesis. In terms of biological role, converts the free carboxyl group of a malonyl-thioester to its methyl ester by transfer of a methyl group from S-adenosyl-L-methionine (SAM). It allows to synthesize pimeloyl-ACP via the fatty acid synthetic pathway. The polypeptide is Malonyl-[acyl-carrier protein] O-methyltransferase (Porphyromonas gingivalis (strain ATCC BAA-308 / W83)).